The primary structure comprises 255 residues: MATIKEVKEQLAILRDLDDPRWASFEEDSRTGVQAAIRKRRKAILAELAEEERLETLLNYEKSLYARGIELIAGVDEVGRGPLAGPVVAAAVILPKLCKIKGLNDSKKIPKSKHEAIYNQVMKEAVAVGIGIKDNYVIDDVNIYEATKLAMIEAIEKLNPQPEHLLIDAMNLDLPIEQTSIIKGDANSLSIAAASIVAKVTRDKMMADYEQEFPGYAFAKNAGYGTKEHLSGIDKFGVTPIHRRSFEPIKSIIKK.

The 186-residue stretch at 70–255 (ELIAGVDEVG…FEPIKSIIKK (186 aa)) folds into the RNase H type-2 domain. 3 residues coordinate a divalent metal cation: aspartate 76, glutamate 77, and aspartate 168.

This sequence belongs to the RNase HII family. The cofactor is Mn(2+). Mg(2+) serves as cofactor.

It localises to the cytoplasm. The enzyme catalyses Endonucleolytic cleavage to 5'-phosphomonoester.. Its function is as follows. Endonuclease that specifically degrades the RNA of RNA-DNA hybrids. In Streptococcus thermophilus (strain ATCC BAA-491 / LMD-9), this protein is Ribonuclease HII.